Consider the following 123-residue polypeptide: Small ribosomal subunit protein uS12 (123 aa).

D89 carries the 3-methylthioaspartic acid modification.

Belongs to the universal ribosomal protein uS12 family. As to quaternary structure, part of the 30S ribosomal subunit. Contacts proteins S8 and S17. May interact with IF1 in the 30S initiation complex.

With S4 and S5 plays an important role in translational accuracy. In terms of biological role, interacts with and stabilizes bases of the 16S rRNA that are involved in tRNA selection in the A site and with the mRNA backbone. Located at the interface of the 30S and 50S subunits, it traverses the body of the 30S subunit contacting proteins on the other side and probably holding the rRNA structure together. The combined cluster of proteins S8, S12 and S17 appears to hold together the shoulder and platform of the 30S subunit. This is Small ribosomal subunit protein uS12 from Nitrobacter hamburgensis (strain DSM 10229 / NCIMB 13809 / X14).